A 61-amino-acid polypeptide reads, in one-letter code: Large ribosomal subunit protein uL29 (61 aa).

The protein belongs to the universal ribosomal protein uL29 family.

The protein is Large ribosomal subunit protein uL29 of Campylobacter curvus (strain 525.92).